The sequence spans 332 residues: Casein kinase II subunit alpha (332 aa).

Residues 43–327 (YEIIRKVGRG…TCQEAMAHPY (285 aa)) enclose the Protein kinase domain. Residues 49–57 (VGRGKYSEV) and lysine 72 each bind ATP. Aspartate 160 (proton acceptor) is an active-site residue.

It belongs to the protein kinase superfamily. Ser/Thr protein kinase family. CK2 subfamily. Tetramer composed of two alpha chains, one beta chain and one beta' chain.

It carries out the reaction L-seryl-[protein] + ATP = O-phospho-L-seryl-[protein] + ADP + H(+). The catalysed reaction is L-threonyl-[protein] + ATP = O-phospho-L-threonyl-[protein] + ADP + H(+). Functionally, catalytic subunit of a constitutively active serine/threonine-protein kinase complex that phosphorylates a large number of substrates containing acidic residues C-terminal to the phosphorylated serine or threonine. The polypeptide is Casein kinase II subunit alpha (Schizosaccharomyces pombe (strain 972 / ATCC 24843) (Fission yeast)).